Consider the following 220-residue polypeptide: Protein ABA DEFICIENT 4, chloroplastic (220 aa).

Residues Met-1–Arg-37 constitute a chloroplast transit peptide. 4 helical membrane passes run Ile-77–Val-97, Ser-112–Pro-132, Met-154–Phe-174, and Ser-195–Ile-215.

In terms of tissue distribution, expressed in root vasculature, root hairs, leaves, trichomes, sepals, stamens, stigma, pedicels, siliques and embryo.

The protein resides in the plastid. The protein localises to the chloroplast membrane. Its function is as follows. Required for neoxanthin biosynthesis, an intermediary step in abscisic acid (ABA) biosynthesis. Probably not involved directly in the enzymatic conversion of violaxanthin to neoxanthin. Cannot convert violaxanthin to neoxanthin in vitro. Required for ABA biosynthesis in response to drought stress. Required for neoxanthin biosynthesis which is involved in photoprotection of photosystem II (PSII). Neoxanthin acts as an antioxidant within the photosystem PSII supercomplex. This is Protein ABA DEFICIENT 4, chloroplastic from Arabidopsis thaliana (Mouse-ear cress).